The sequence spans 390 residues: Chorismate synthase (390 aa).

Positions 48 and 54 each coordinate NADP(+). Residues 125-127, 238-239, G278, 293-297, and R319 contribute to the FMN site; these read RSS, NA, and KPTSS. Positions 360 to 390 are disordered; the sequence is KVPGNIINPTNPVTTQPDVRRAEDPEPDENS. Residues 366 to 376 are compositionally biased toward polar residues; sequence INPTNPVTTQP.

This sequence belongs to the chorismate synthase family. In terms of assembly, homotetramer. It depends on FMNH2 as a cofactor.

It carries out the reaction 5-O-(1-carboxyvinyl)-3-phosphoshikimate = chorismate + phosphate. It functions in the pathway metabolic intermediate biosynthesis; chorismate biosynthesis; chorismate from D-erythrose 4-phosphate and phosphoenolpyruvate: step 7/7. Its function is as follows. Catalyzes the anti-1,4-elimination of the C-3 phosphate and the C-6 proR hydrogen from 5-enolpyruvylshikimate-3-phosphate (EPSP) to yield chorismate, which is the branch point compound that serves as the starting substrate for the three terminal pathways of aromatic amino acid biosynthesis. This reaction introduces a second double bond into the aromatic ring system. This is Chorismate synthase from Nitrosomonas eutropha (strain DSM 101675 / C91 / Nm57).